Consider the following 155-residue polypeptide: 3-dehydroquinate dehydratase (155 aa).

The Proton acceptor role is filled by tyrosine 32. Substrate is bound by residues asparagine 84, histidine 90, and aspartate 97. Histidine 110 acts as the Proton donor in catalysis. Residues 111-112 (LS) and arginine 121 each bind substrate.

This sequence belongs to the type-II 3-dehydroquinase family. Homododecamer.

It carries out the reaction 3-dehydroquinate = 3-dehydroshikimate + H2O. Its pathway is metabolic intermediate biosynthesis; chorismate biosynthesis; chorismate from D-erythrose 4-phosphate and phosphoenolpyruvate: step 3/7. Its function is as follows. Catalyzes a trans-dehydration via an enolate intermediate. In Ralstonia pickettii (strain 12J), this protein is 3-dehydroquinate dehydratase.